We begin with the raw amino-acid sequence, 365 residues long: Aminomethyltransferase (365 aa).

It belongs to the GcvT family. In terms of assembly, the glycine cleavage system is composed of four proteins: P, T, L and H.

It carries out the reaction N(6)-[(R)-S(8)-aminomethyldihydrolipoyl]-L-lysyl-[protein] + (6S)-5,6,7,8-tetrahydrofolate = N(6)-[(R)-dihydrolipoyl]-L-lysyl-[protein] + (6R)-5,10-methylene-5,6,7,8-tetrahydrofolate + NH4(+). In terms of biological role, the glycine cleavage system catalyzes the degradation of glycine. This is Aminomethyltransferase from Geobacillus thermodenitrificans (strain NG80-2).